The following is a 260-amino-acid chain: Putative ABC transporter ATP-binding protein PYRAB01300 (260 aa).

One can recognise an ABC transporter domain in the interval 2 to 234; it reads IEFKDVWFWY…DLRNFSLVEP (233 aa). 34–41 provides a ligand contact to ATP; sequence GPNGSGKT.

Belongs to the ABC transporter superfamily.

Its subcellular location is the cell membrane. Probably part of an ABC transporter complex. Responsible for energy coupling to the transport system. This chain is Putative ABC transporter ATP-binding protein PYRAB01300, found in Pyrococcus abyssi (strain GE5 / Orsay).